We begin with the raw amino-acid sequence, 1088 residues long: DNA damage-binding protein 1a (1088 aa).

It belongs to the DDB1 family. Component of the CDD complex, at least composed of COP10, DET1 and DDB1A. Component of the CUL4-RBX1-CDD complex. Component of the CUL4-RBX1-DDB1-PRL1 E3 ubiquitin-protein ligase complex. Component of the UV-DDB complex, which is composed of DDB1A and DDB2. Interacts with RAE1. Interacts with WDR55. Interacts with ATCSA-1. Interacts with DDA1. Binds to ASG2; the subcellular localization of this complex depends on ASG2 farnesylation status. Binds to KTN80.2/DWA3. Interacts with HTD1. Interacts directly with DHU1.

The protein localises to the cytoplasm. It localises to the nucleus. It functions in the pathway protein modification; protein ubiquitination. Component of light signal transduction machinery. Involved in repression of photomorphogenesis in darkness by participating in the CDD complex, a complex probably required to regulate the activity of ubiquitin conjugating enzymes (E2s). Repression of photomorphogenesis is probably mediated by ubiquitination and subsequent degradation of photomorphogenesis-promoting factors such as HY5, HYH and LAF1. Plays a role in DNA repair by forming with DDB2 the UV-damaged DNA-binding protein complex (UV-DDB). Component of the CUL4-RBX1-DDB1-PRL1 E3 ubiquitin-protein ligase complex. The sequence is that of DNA damage-binding protein 1a from Arabidopsis thaliana (Mouse-ear cress).